Reading from the N-terminus, the 212-residue chain is Cell division protein SepF (212 aa).

A disordered region spans residues 32 to 104 (RYADPDTSYD…APLGSDAHRE (73 aa)). Over residues 64–73 (EAEEDGGDYG) the composition is skewed to acidic residues.

This sequence belongs to the SepF family. Homodimer. Interacts with FtsZ.

It localises to the cytoplasm. Cell division protein that is part of the divisome complex and is recruited early to the Z-ring. Probably stimulates Z-ring formation, perhaps through the cross-linking of FtsZ protofilaments. Its function overlaps with FtsA. The protein is Cell division protein SepF of Saccharopolyspora erythraea (strain ATCC 11635 / DSM 40517 / JCM 4748 / NBRC 13426 / NCIMB 8594 / NRRL 2338).